Reading from the N-terminus, the 278-residue chain is MLQFIRHYLLAVQFFTRIPVTGRLADWVGYSPGMLRASAVHFPGIGVVVGGAAAAMFALLQLLLPDTTFTPLVAAAFSTVATVWLTGGFHEDGLADVADGLGGSYDRERALEIMKDSRVGAFGAMALVLALLCKVALLALLGSVEAVPEAGEAPAFSSWYVCAALWTGHIVSRGLPLVMIWRLPHVGDIAISKSKPLADQISAGGLAIAFSWCFGALALASLALDAINLIVACGFSVLALLGLLRFFRRRLQGFTGDCLGTTQQVCEIAFYLGLAVSL.

A run of 6 helical transmembrane segments spans residues Gly44–Leu64, Phe69–Phe89, Ala121–Leu141, Val161–Trp181, Gly204–Leu224, and Ile227–Phe247.

This sequence belongs to the CobS family. Mg(2+) is required as a cofactor.

It is found in the cell inner membrane. The catalysed reaction is alpha-ribazole + adenosylcob(III)inamide-GDP = adenosylcob(III)alamin + GMP + H(+). It catalyses the reaction alpha-ribazole 5'-phosphate + adenosylcob(III)inamide-GDP = adenosylcob(III)alamin 5'-phosphate + GMP + H(+). It functions in the pathway cofactor biosynthesis; adenosylcobalamin biosynthesis; adenosylcobalamin from cob(II)yrinate a,c-diamide: step 7/7. Joins adenosylcobinamide-GDP and alpha-ribazole to generate adenosylcobalamin (Ado-cobalamin). Also synthesizes adenosylcobalamin 5'-phosphate from adenosylcobinamide-GDP and alpha-ribazole 5'-phosphate. This chain is Adenosylcobinamide-GDP ribazoletransferase, found in Polaromonas naphthalenivorans (strain CJ2).